A 318-amino-acid polypeptide reads, in one-letter code: Ribonuclease Z (318 aa).

Histidine 62, histidine 64, aspartate 66, histidine 67, histidine 139, aspartate 210, and histidine 268 together coordinate Zn(2+). The Proton acceptor role is filled by aspartate 66.

It belongs to the RNase Z family. As to quaternary structure, homodimer. The cofactor is Zn(2+).

It catalyses the reaction Endonucleolytic cleavage of RNA, removing extra 3' nucleotides from tRNA precursor, generating 3' termini of tRNAs. A 3'-hydroxy group is left at the tRNA terminus and a 5'-phosphoryl group is left at the trailer molecule.. Functionally, zinc phosphodiesterase, which displays some tRNA 3'-processing endonuclease activity. Probably involved in tRNA maturation, by removing a 3'-trailer from precursor tRNA. This is Ribonuclease Z from Microcystis aeruginosa (strain NIES-843 / IAM M-2473).